We begin with the raw amino-acid sequence, 124 residues long: Large ribosomal subunit protein bL12 (124 aa).

It belongs to the bacterial ribosomal protein bL12 family. Homodimer. Part of the ribosomal stalk of the 50S ribosomal subunit. Forms a multimeric L10(L12)X complex, where L10 forms an elongated spine to which 2 to 4 L12 dimers bind in a sequential fashion. Binds GTP-bound translation factors.

Forms part of the ribosomal stalk which helps the ribosome interact with GTP-bound translation factors. Is thus essential for accurate translation. This is Large ribosomal subunit protein bL12 from Campylobacter fetus subsp. fetus (strain 82-40).